The chain runs to 320 residues: Olfactory receptor 13C8 (320 aa).

The Extracellular segment spans residues 1–25 (MERTNDSTSTEFFLVGLSAHPKLQT). The N-linked (GlcNAc...) asparagine glycan is linked to Asn5. Residues 26–46 (VFFVLILWMYLMILLGNGVLI) form a helical membrane-spanning segment. The Cytoplasmic segment spans residues 47–54 (SVIIFDSH). The helical transmembrane segment at 55-75 (LHTPMYFFLCNLSFLDVCYTS) threads the bilayer. Residues 76 to 99 (SSVPLILASFLAVKKKVSFSGCMV) lie on the Extracellular side of the membrane. Cysteines 97 and 189 form a disulfide. Residues 100–120 (QMFISFAMGATECMILGTMAL) traverse the membrane as a helical segment. The Cytoplasmic portion of the chain corresponds to 121 to 139 (DRYVAICYPLRYPVIMSKG). The chain crosses the membrane as a helical span at residues 140 to 160 (AYVAMAAGSWVTGLVDSVVQT). At 161 to 197 (AFAMQLPFCANNVIKHFVCEILAILKLACADISINVI) the chain is on the extracellular side. Residues 198–217 (SMTGSNLIVLVIPLLVISIS) traverse the membrane as a helical segment. Over 218–237 (YIFIVATILRIPSTEGKHKA) the chain is Cytoplasmic. The helical transmembrane segment at 238 to 258 (FSTCSAHLTVVIIFYGTIFFM) threads the bilayer. At 259–277 (YAKPESKASVDSGNEDIIE) the chain is on the extracellular side. A helical membrane pass occupies residues 278–298 (ALISLFYGVMTPMLNPLIYSL). Topologically, residues 299 to 320 (RNKDVKAAVKNILCRKNFSDGK) are cytoplasmic.

This sequence belongs to the G-protein coupled receptor 1 family.

The protein resides in the cell membrane. Its function is as follows. Odorant receptor. This chain is Olfactory receptor 13C8 (OR13C8), found in Homo sapiens (Human).